The sequence spans 446 residues: MSGSSTPKSLPTSGQQSLHDIKHPLSCSPSAEDDAAGENGAVIIESPSPDLPNTEPSSLADKDLSLPNGTPADTSSPASSSSLLNRLQLDDDLDGETRDLFVTVDDPKKHVCTMETYITYRVSTKTTRTEFDLPEYSIRRRYQDFDWLRNKLEETQPTHFIPPLPEKFVVKGVVDRFSEEFVETRRKALDKFLKRIADHPVLSFNEHFNVFLTAKDLNSHKKQGITLLSKMGESVRYVTSGYKLRNRPVEFATITDYLDTFQLKLGTIDRIAQRIIKEEVEYLMELREYGPVYSTWSGLERELNEPLEGVSACVGNCSTALEELTEDMSEDFLPVIREYMLYSESMKTVLKKRDQVQAEYEAKAEAAALKREERSTVPTDVEKCQDKVECFNADLKADMDRWQNNKRQDFRQLLMGMADKNIQYYEKCLTAWESIIPLLQDKQEPK.

The segment covering M1 to L18 has biased composition (polar residues). The interval M1–L84 is disordered. Residues T70 to L84 show a composition bias toward low complexity. The PX domain maps to R98–S219. Residues R141, Q143, K171, and R185 each coordinate a 1,2-diacyl-sn-glycero-3-phospho-(1D-myo-inositol-3-phosphate). The 204-residue stretch at K243–K446 folds into the BAR domain.

The protein belongs to the sorting nexin family.

It is found in the early endosome membrane. In terms of biological role, involved in the regulation of endocytosis and in several stages of intracellular trafficking. Together with snx4, involved in autophagosome assembly. This is Sorting nexin-30 (snx30) from Xenopus tropicalis (Western clawed frog).